The following is a 498-amino-acid chain: UDP-N-acetylmuramate--L-alanine ligase (498 aa).

120–126 (GSHGKTT) contacts ATP.

This sequence belongs to the MurCDEF family.

Its subcellular location is the cytoplasm. It carries out the reaction UDP-N-acetyl-alpha-D-muramate + L-alanine + ATP = UDP-N-acetyl-alpha-D-muramoyl-L-alanine + ADP + phosphate + H(+). The protein operates within cell wall biogenesis; peptidoglycan biosynthesis. Its function is as follows. Cell wall formation. This is UDP-N-acetylmuramate--L-alanine ligase from Rickettsia typhi (strain ATCC VR-144 / Wilmington).